A 348-amino-acid polypeptide reads, in one-letter code: Endoglucanase-6B (348 aa).

The substrate site is built by W52 and S54. Catalysis depends on proton donor residues D92 and D139. Substrate is bound by residues N183, W186, N222, W282, K310, and E314. Positions 222 to 241 (NYNPYSTSNPPPYTSGSPSP) are enriched in low complexity. A disordered region spans residues 222–244 (NYNPYSTSNPPPYTSGSPSPDES).

It belongs to the glycosyl hydrolase 6 (cellulase B) family. As to quaternary structure, monomer.

The enzyme catalyses Endohydrolysis of (1-&gt;4)-beta-D-glucosidic linkages in cellulose, lichenin and cereal beta-D-glucans.. In terms of biological role, plays a central role in the recycling of plant biomass. The biological conversion of cellulose to glucose generally requires three types of hydrolytic enzymes: (1) Endoglucanases which cut internal beta-1,4-glucosidic bonds; (2) Exocellobiohydrolases that cut the disaccharide cellobiose from the non-reducing end of the cellulose polymer chain; (3) Beta-1,4-glucosidases which hydrolyze the cellobiose and other short cello-oligosaccharides to glucose. The protein is Endoglucanase-6B of Humicola insolens (Soft-rot fungus).